We begin with the raw amino-acid sequence, 284 residues long: Digeranylgeranylglyceryl phosphate synthase (284 aa).

A run of 7 helical transmembrane segments spans residues 10 to 30 (IHNVIGAGLGAFTGYVASSMW), 37 to 57 (LILAVLVVALVDAGGNAINDV), 76 to 98 (AVSLRTATSLSYGLMGVGVILSA), 102 to 119 (YLQFLVALLTSVALIFYA), 126 to 146 (GIYGNLVVATATALSLFYGGL), 217 to 237 (LPLFLGYNILYGIVLVPFLYI), and 260 to 280 (GSAFLGMVAFALGSLPFQFLF).

The protein belongs to the UbiA prenyltransferase family. DGGGP synthase subfamily. Requires Mg(2+) as cofactor.

The protein localises to the cell membrane. It carries out the reaction sn-3-O-(geranylgeranyl)glycerol 1-phosphate + (2E,6E,10E)-geranylgeranyl diphosphate = 2,3-bis-O-(geranylgeranyl)-sn-glycerol 1-phosphate + diphosphate. It participates in membrane lipid metabolism; glycerophospholipid metabolism. In terms of biological role, prenyltransferase that catalyzes the transfer of the geranylgeranyl moiety of geranylgeranyl diphosphate (GGPP) to the C2 hydroxyl of (S)-3-O-geranylgeranylglyceryl phosphate (GGGP). This reaction is the second ether-bond-formation step in the biosynthesis of archaeal membrane lipids. The chain is Digeranylgeranylglyceryl phosphate synthase from Metallosphaera sedula (strain ATCC 51363 / DSM 5348 / JCM 9185 / NBRC 15509 / TH2).